Consider the following 362-residue polypeptide: tRNA-specific 2-thiouridylase MnmA (362 aa).

ATP is bound by residues alanine 8–serine 15 and methionine 35. The tract at residues asparagine 95 to aspartate 97 is interaction with target base in tRNA. The active-site Nucleophile is the cysteine 100. Cysteine 100 and cysteine 196 are disulfide-bonded. Glycine 124 is a binding site for ATP. Residues lysine 146 to glutamine 148 form an interaction with tRNA region. Catalysis depends on cysteine 196, which acts as the Cysteine persulfide intermediate. The interaction with tRNA stretch occupies residues arginine 303–tyrosine 304.

Belongs to the MnmA/TRMU family.

It is found in the cytoplasm. It carries out the reaction S-sulfanyl-L-cysteinyl-[protein] + uridine(34) in tRNA + AH2 + ATP = 2-thiouridine(34) in tRNA + L-cysteinyl-[protein] + A + AMP + diphosphate + H(+). Its function is as follows. Catalyzes the 2-thiolation of uridine at the wobble position (U34) of tRNA, leading to the formation of s(2)U34. This chain is tRNA-specific 2-thiouridylase MnmA, found in Chlamydia abortus (strain DSM 27085 / S26/3) (Chlamydophila abortus).